We begin with the raw amino-acid sequence, 1849 residues long: Brefeldin A-inhibited guanine nucleotide-exchange protein 1 (1849 aa).

The interval 2 to 224 (YEGKKTKNMF…QEAKQMEKER (223 aa)) is DCB; DCB:DCB and DCB:HUS domain interaction. Basic and acidic residues predominate over residues 46-58 (AETEKQSPPHGEA). 3 disordered regions span residues 46 to 65 (AETEKQSPPHGEAKAGSSTL), 216 to 301 (EAKQ…ADQA), and 350 to 413 (INVS…SPGA). Residues Ser52, Ser286, Ser289, and Ser290 each carry the phosphoserine modification. Polar residues-rich tracts occupy residues 350–360 (INVSADGNNGT) and 394–409 (SVSSNDTQESGNSSGP). 2 positions are modified to phosphoserine: Ser397 and Ser410. Residues 557–577 (ADAQSVVDIYVNYDCDLNAAN) form an HUS; DCB:HUS domain interaction region. Residues 634 to 687 (PNSQTTLGQEKPSEQETSEMKHPETINRYGSLNSLESTSSSGIGSYSTQMSGTD) are disordered. Basic and acidic residues predominate over residues 644–658 (KPSEQETSEMKHPET). Residues 664–684 (SLNSLESTSSSGIGSYSTQMS) show a composition bias toward low complexity. An SEC7 domain is found at 709–840 (FTKKPKRGIQ…IIMLTTDLHS (132 aa)). A Nuclear localization signal (NLS) motif is present at residues 711–715 (KKPKR). Phosphoserine is present on residues Ser1079, Ser1566, and Ser1569.

Homodimer. Interacts with ARFGEF2/BIG2; both proteins are probably part of the same or very similar macromolecular complexes. Interacts with FKBP2. Interacts with MYO9B. Interacts with PRKAR1A and PRKAR2A. Interacts with PPP1CC. Interacts with NCL, FBL, NUP62 and U3 small nucleolar RNA. Interacts with DPY30. Interacts with PDE3A. Interacts with KANK1. Interacts with TBC1D22A and TBC1D22B. Phosphorylated. In vitro phosphorylated by PKA reducing its GEF activity and dephosphorylated by phosphatase PP1. As to expression, abundantly expressed in kidney, somewhat less abundant in lung, spleen, and brain, and still less abundant in heart.

The protein resides in the cytoplasm. Its subcellular location is the perinuclear region. The protein localises to the golgi apparatus. It localises to the trans-Golgi network. It is found in the nucleus. The protein resides in the nucleolus. Its subcellular location is the nucleus matrix. The protein localises to the membrane. With respect to regulation, inhibited by brefeldin A. Promotes guanine-nucleotide exchange on ARF1 and ARF3. Promotes the activation of ARF1/ARF3 through replacement of GDP with GTP. Involved in vesicular trafficking. Required for the maintenance of Golgi structure; the function may be independent of its GEF activity. Required for the maturation of integrin beta-1 in the Golgi. Involved in the establishment and persistence of cell polarity during directed cell movement in wound healing. Proposed to act as A kinase-anchoring protein (AKAP) and may mediate crosstalk between Arf and PKA pathways. Inhibits GAP activity of MYO9B probably through competitive RhoA binding. The function in the nucleus remains to be determined. The chain is Brefeldin A-inhibited guanine nucleotide-exchange protein 1 (ARFGEF1) from Bos taurus (Bovine).